The following is a 213-amino-acid chain: Citrate synthase, mitochondrial (213 aa).

His-74 is a catalytic residue. Residues Lys-94 and Lys-100 each carry the N6-acetyllysine; alternate modification. N6-succinyllysine; alternate occurs at positions 94 and 100. His-120 is a catalytic residue. Arg-129 serves as a coordination point for oxaloacetate. Residue Lys-148 is modified to N6-acetyllysine; alternate. Position 148 is an N6-succinyllysine; alternate (Lys-148). N6-acetyllysine is present on Lys-155. Lys-166 bears the N6-acetyllysine; alternate mark. N6-succinyllysine; alternate is present on Lys-166. At Lys-168 the chain carries N6,N6,N6-trimethyllysine. Asp-175 is a catalytic residue. Arg-201 lines the oxaloacetate pocket.

Belongs to the citrate synthase family. Homodimer. Post-translationally, in response to mitochondrial stress, the precursor protein is ubiquitinated by the SIFI complex in the cytoplasm before mitochondrial import, leading to its degradation. Within the SIFI complex, UBR4 initiates ubiquitin chain that are further elongated or branched by KCMF1.

The protein resides in the mitochondrion matrix. It carries out the reaction oxaloacetate + acetyl-CoA + H2O = citrate + CoA + H(+). Its pathway is carbohydrate metabolism; tricarboxylic acid cycle; isocitrate from oxaloacetate: step 1/2. In terms of biological role, key enzyme of the Krebs tricarboxylic acid cycle which catalyzes the synthesis of citrate from acetyl coenzyme A and oxaloacetate. This chain is Citrate synthase, mitochondrial, found in Mesocricetus auratus (Golden hamster).